Here is a 272-residue protein sequence, read N- to C-terminus: Putative phosphoenolpyruvate synthase regulatory protein (272 aa).

Residue 152-159 (GVSRCGKT) coordinates ADP.

Belongs to the pyruvate, phosphate/water dikinase regulatory protein family. PSRP subfamily.

The catalysed reaction is [pyruvate, water dikinase] + ADP = [pyruvate, water dikinase]-phosphate + AMP + H(+). It catalyses the reaction [pyruvate, water dikinase]-phosphate + phosphate + H(+) = [pyruvate, water dikinase] + diphosphate. In terms of biological role, bifunctional serine/threonine kinase and phosphorylase involved in the regulation of the phosphoenolpyruvate synthase (PEPS) by catalyzing its phosphorylation/dephosphorylation. The sequence is that of Putative phosphoenolpyruvate synthase regulatory protein from Pseudomonas fluorescens (strain SBW25).